A 928-amino-acid polypeptide reads, in one-letter code: 2-oxoglutarate dehydrogenase E1 component (928 aa).

It belongs to the alpha-ketoglutarate dehydrogenase family. Homodimer. Part of the 2-oxoglutarate dehydrogenase (OGDH) complex composed of E1 (2-oxoglutarate dehydrogenase), E2 (dihydrolipoamide succinyltransferase) and E3 (dihydrolipoamide dehydrogenase); the complex contains multiple copies of the three enzymatic components (E1, E2 and E3). The cofactor is thiamine diphosphate.

The catalysed reaction is N(6)-[(R)-lipoyl]-L-lysyl-[protein] + 2-oxoglutarate + H(+) = N(6)-[(R)-S(8)-succinyldihydrolipoyl]-L-lysyl-[protein] + CO2. Functionally, E1 component of the 2-oxoglutarate dehydrogenase (OGDH) complex which catalyzes the decarboxylation of 2-oxoglutarate, the first step in the conversion of 2-oxoglutarate to succinyl-CoA and CO(2). The polypeptide is 2-oxoglutarate dehydrogenase E1 component (sucA) (Rickettsia conorii (strain ATCC VR-613 / Malish 7)).